The following is a 274-amino-acid chain: 2,3,4,5-tetrahydropyridine-2,6-dicarboxylate N-succinyltransferase (274 aa).

Substrate is bound by residues R106 and D143.

This sequence belongs to the transferase hexapeptide repeat family. As to quaternary structure, homotrimer.

The protein localises to the cytoplasm. It catalyses the reaction (S)-2,3,4,5-tetrahydrodipicolinate + succinyl-CoA + H2O = (S)-2-succinylamino-6-oxoheptanedioate + CoA. Its pathway is amino-acid biosynthesis; L-lysine biosynthesis via DAP pathway; LL-2,6-diaminopimelate from (S)-tetrahydrodipicolinate (succinylase route): step 1/3. The chain is 2,3,4,5-tetrahydropyridine-2,6-dicarboxylate N-succinyltransferase from Rickettsia conorii (strain ATCC VR-613 / Malish 7).